A 768-amino-acid polypeptide reads, in one-letter code: P-selectin (768 aa).

The signal sequence occupies residues 1–41 (MAGCPKGSWKPRLRSVVLGAAQLIWLSALISELVNRKKVAT). The Extracellular portion of the chain corresponds to 42 to 709 (WTYNYSTKAY…QAGTLTIQEA (668 aa)). 3 N-linked (GlcNAc...) asparagine glycosylation sites follow: Asn45, Asn54, and Asn107. The C-type lectin domain maps to 58-158 (AFCKRHFTDL…PCFKRKRALC (101 aa)). 20 disulfide bridges follow: Cys60-Cys158, Cys131-Cys150, Cys168-Cys183, Cys185-Cys194, Cys200-Cys244, Cys230-Cys257, Cys262-Cys306, Cys292-Cys319, Cys324-Cys368, Cys354-Cys381, Cys386-Cys430, Cys416-Cys443, Cys448-Cys492, Cys478-Cys505, Cys510-Cys554, Cys540-Cys567, Cys580-Cys624, Cys610-Cys637, Cys642-Cys686, and Cys672-Cys699. Residues Glu121, Asn123, and Asn124 each coordinate Ca(2+). Asn123 provides a ligand contact to a carbohydrate. Positions 133 and 146 each coordinate a carbohydrate. Positions 146 and 147 each coordinate Ca(2+). Residues 159-195 (YTASCQDMSCNSQGERIETIGSYTCSCYPGFYGPECE) enclose the EGF-like domain. 8 consecutive Sushi domains span residues 198-259 (QECG…QCKA), 260-321 (VQCQ…TCEA), 322-383 (IACE…VCEA), 384-445 (LQCQ…ECQA), 446-507 (VSCT…MCEA), 508-569 (IKCP…TCKG), 578-639 (VRCP…VCRA), and 640-701 (VKCS…TCQA). A glycan (N-linked (GlcNAc...) asparagine) is linked at Asn212. N-linked (GlcNAc...) asparagine glycosylation is present at Asn347. Asn456 carries N-linked (GlcNAc...) asparagine glycosylation. Asn603 carries an N-linked (GlcNAc...) asparagine glycan. 3 N-linked (GlcNAc...) asparagine glycosylation sites follow: Asn654, Asn661, and Asn679. Residues 710–733 (LTYLGGALASTSGLAVGGTLLALL) form a helical membrane-spanning segment. The Cytoplasmic portion of the chain corresponds to 734–768 (RKRLRKKDDGKCPLNPHSHLGTYGVFTNAAYDPTP). Cys745 carries S-palmitoyl cysteine; alternate lipidation. Cys745 carries the S-stearoyl cysteine; alternate lipid modification. Positions 756–759 (YGVF) match the Endocytosis signal motif. The segment at 759-768 (FTNAAYDPTP) is interaction with SNX17.

It belongs to the selectin/LECAM family. In terms of assembly, interacts with SNX17. Interacts with SELPLG/PSGL1 and PODXL2 and mediates neutrophil adhesion and leukocyte rolling. This interaction requires the sialyl-Lewis X epitope of SELPLG and PODXL2, and specific tyrosine sulfation on SELPLG. Interacts (via C-type lectin domain) with alpha-IIb/beta3 integrin ITGA2B:ITGB3 and alpha-V/beta-3 integrin ITGAV:ITGB3. Interacts with alpha5/beta1 integrin ITGA5:ITGB1 and alpha4/beta1 integrin ITGA4:ITGB. As to expression, not detected in the absence of exposure to lipopolysaccharide (LPS). Detected only after exposure to lipopolysaccharide (LPS) in the tissues examined: spleen, lung, brain, liver, heart, kidney, thymus and small intestine.

Its subcellular location is the cell membrane. Its function is as follows. Ca(2+)-dependent receptor for myeloid cells that binds to carbohydrates on neutrophils and monocytes. Mediates the interaction of activated endothelial cells or platelets with leukocytes. The ligand recognized is sialyl-Lewis X. Mediates rapid rolling of leukocyte rolling over vascular surfaces during the initial steps in inflammation through interaction with SELPLG. Mediates cell-cell interactions and cell adhesion via the interaction with integrin alpha-IIb/beta3 (ITGA2B:ITGB3) and integrin alpha-V/beta-3 (ITGAV:ITGB3). This Rattus norvegicus (Rat) protein is P-selectin (Selp).